An 871-amino-acid polypeptide reads, in one-letter code: Transient receptor potential cation channel subfamily V member 4 (871 aa).

The interval 1-68 is disordered; the sequence is MADSSEGPRA…GPGDGRPNLR (68 aa). Topologically, residues 1-469 are cytoplasmic; that stretch reads MADSSEGPRA…RDKWRKFGAV (469 aa). Y110 carries the phosphotyrosine modification. Residues K192, K197, N201, 236–239, and R248 contribute to the ATP site; that span reads YRGQ. ANK repeat units lie at residues 237-266 and 284-313; these read RGQT…DVHA and FGEL…KKAD. An a 1,2-diacyl-sn-glycero-3-phospho-(1D-myo-inositol-4,5-bisphosphate)-binding site is contributed by 249 to 251; it reads RCK. Y253 is subject to Phosphotyrosine. Residues 296-299 and K344 each bind a 1,2-diacyl-sn-glycero-3-phospho-(1D-myo-inositol-4,5-bisphosphate); that span reads NQPH. An ANK 3 repeat occupies 369–398; it reads DGLSPLMMAAKTGKIGIFQHIIRREVTDED. Residues 470 to 490 traverse the membrane as a helical segment; it reads SFYINVVSYLCAMVIFTLTAY. The Extracellular segment spans residues 491–507; it reads YQPLEGTPPYPYRTTVD. A helical transmembrane segment spans residues 508–534; that stretch reads YLRLAGEVITLFTGVLFFFTNIKDLFM. The Cytoplasmic portion of the chain corresponds to 535-547; the sequence is KKCPGVNSLFIDG. The helical transmembrane segment at 548-568 threads the bilayer; that stretch reads SFQLLYFIYSVLVIVSAALYL. Residues 569–572 lie on the Extracellular side of the membrane; it reads AGIE. A helical transmembrane segment spans residues 573–593; the sequence is AYLAVMVFALVLGWMNALYFT. The Cytoplasmic segment spans residues 594–608; that stretch reads RGLKLTGTYSIMIQK. Residues 609 to 636 traverse the membrane as a helical segment; that stretch reads ILFKDLFRFLLVYLLFMIGYASALVSLL. Topologically, residues 637–665 are extracellular; it reads NPCANMKVCNEDQTNCTVPTYPSCRDSET. The segment at residues 666 to 685 is an intramembrane region (pore-forming); sequence FSTFLLDLFKLTIGMGDLEM. The Selectivity filter motif lies at 679-682; it reads GMGD. A Ca(2+)-binding site is contributed by D682. Over 686–693 the chain is Extracellular; the sequence is LSSTKYPV. A helical membrane pass occupies residues 694 to 722; that stretch reads VFIILLVTYIILTFVLLLNMLIALMGETV. The Cytoplasmic segment spans residues 723–871; the sequence is GQVSKESKHI…RKWRTDDAPL (149 aa). Y805 carries the phosphotyrosine modification. Residues 812-831 are interaction with calmodulin and ITPR3; that stretch reads HTVGRLRRDRWSSVVPRVVE. Position 824 is a phosphoserine (S824). Positions 849–871 are disordered; sequence GNPRCDGHQQGYPRKWRTDDAPL.

It belongs to the transient receptor (TC 1.A.4) family. TrpV subfamily. TRPV4 sub-subfamily. In terms of assembly, homotetramer. Self-associates in an isoform-specific manner. Isoform 1 and isoform 5 can oligomerize, but isoform 2, isoform 4 and isoform 6 cannot oligomerize. Interacts with calmodulin. Interacts with Map7 and Src family Tyr protein kinases LYN, SRC, FYN, HCK, LCK and YES. Interacts with CTNNB1. The TRPV4 and CTNNB1 complex can interact with CDH1. Interacts with PACSIN1, PACSIN2 and PACSIN3 (via SH3 domain). Part of a complex containing MLC1, AQP4, HEPACAM and ATP1B1. Interacts with ITPR3. Interacts with AQP5; the interaction is probably indirect and regulates TRPV4 activation by hypotonicity. Interacts with ANO1. Interacts (via C-terminus) with PKD2 (via C-terminus). Interacts with DDX3X; this interaction is decreased when the channel is activated. In terms of processing, N-glycosylated. In terms of tissue distribution, found in the synoviocytes from patients with (RA) and without (CTR) rheumatoid arthritis (at protein level).

It localises to the cell membrane. Its subcellular location is the apical cell membrane. The protein localises to the cell junction. It is found in the adherens junction. The protein resides in the cell projection. It localises to the cilium. Its subcellular location is the endoplasmic reticulum. It catalyses the reaction Ca(2+)(in) = Ca(2+)(out). With respect to regulation, channel activation is inhibited by binding to phosphatidylinositol-4,5-bisphosphate, and to a much lesser degree by phosphatidylinositol-3,4,5-trisphosphate. Not inhibited by phosphatidylinositol-3,4-bisphosphate and phosphatidylinositol-3,5-bisphosphate. Functionally, non-selective calcium permeant cation channel involved in osmotic sensitivity and mechanosensitivity. Activation by exposure to hypotonicity within the physiological range exhibits an outward rectification. Also activated by heat, low pH, citrate and phorbol esters. Increase of intracellular Ca(2+) potentiates currents. Channel activity seems to be regulated by a calmodulin-dependent mechanism with a negative feedback mechanism. Promotes cell-cell junction formation in skin keratinocytes and plays an important role in the formation and/or maintenance of functional intercellular barriers. Acts as a regulator of intracellular Ca(2+) in synoviocytes. Plays an obligatory role as a molecular component in the nonselective cation channel activation induced by 4-alpha-phorbol 12,13-didecanoate and hypotonic stimulation in synoviocytes and also regulates production of IL-8. Together with PKD2, forms mechano- and thermosensitive channels in cilium. Negatively regulates expression of PPARGC1A, UCP1, oxidative metabolism and respiration in adipocytes. Regulates expression of chemokines and cytokines related to pro-inflammatory pathway in adipocytes. Together with AQP5, controls regulatory volume decrease in salivary epithelial cells. Required for normal development and maintenance of bone and cartilage. In its inactive state, may sequester DDX3X at the plasma membrane. When activated, the interaction between both proteins is affected and DDX3X relocalizes to the nucleus. In neurons of the central nervous system, could play a role in triggering voluntary water intake in response to increased sodium concentration in body fluid. Non-selective calcium permeant cation channel involved in osmotic sensitivity and mechanosensitivity. Activation by exposure to hypotonicity within the physiological range exhibits an outward rectification. Also activated by phorbol esters. Has the same channel activity as isoform 1, and is activated by the same stimuli. In terms of biological role, lacks channel activity, due to impaired oligomerization and intracellular retention. Its function is as follows. (Microbial infection) Facilitates hepatitis C virus (HCV) replication, possibly through its action on DDX3X. Functionally, (Microbial infection) Facilitates Dengue virus (DENV) replication, possibly through its action on DDX3X. (Microbial infection) Facilitates Zika virus (ZIKV) replication, possibly through its action on DDX3X. In Homo sapiens (Human), this protein is Transient receptor potential cation channel subfamily V member 4 (TRPV4).